A 258-amino-acid chain; its full sequence is UPF0246 protein YaaA (258 aa).

It belongs to the UPF0246 family.

The chain is UPF0246 protein YaaA from Escherichia coli (strain 55989 / EAEC).